We begin with the raw amino-acid sequence, 263 residues long: 3-methyl-2-oxobutanoate hydroxymethyltransferase (263 aa).

2 residues coordinate Mg(2+): aspartate 43 and aspartate 82. Residues aspartate 43–serine 44, aspartate 82, and lysine 111 contribute to the 3-methyl-2-oxobutanoate site. Glutamate 113 serves as a coordination point for Mg(2+). The Proton acceptor role is filled by glutamate 179.

The protein belongs to the PanB family. As to quaternary structure, homodecamer; pentamer of dimers. The cofactor is Mg(2+).

It is found in the cytoplasm. It catalyses the reaction 3-methyl-2-oxobutanoate + (6R)-5,10-methylene-5,6,7,8-tetrahydrofolate + H2O = 2-dehydropantoate + (6S)-5,6,7,8-tetrahydrofolate. It participates in cofactor biosynthesis; (R)-pantothenate biosynthesis; (R)-pantoate from 3-methyl-2-oxobutanoate: step 1/2. In terms of biological role, catalyzes the reversible reaction in which hydroxymethyl group from 5,10-methylenetetrahydrofolate is transferred onto alpha-ketoisovalerate to form ketopantoate. This Neisseria gonorrhoeae (strain ATCC 700825 / FA 1090) protein is 3-methyl-2-oxobutanoate hydroxymethyltransferase.